An 804-amino-acid polypeptide reads, in one-letter code: Pentatricopeptide repeat-containing protein At4g35130, chloroplastic (804 aa).

The N-terminal 19 residues, 1–19 (MAATLLSQCYRIYNSDACK), are a transit peptide targeting the chloroplast. 16 PPR repeats span residues 63–93 (NDPA…MNKA), 94–128 (DAFL…GVKA), 129–163 (DTFT…GFVS), 164–194 (DVYV…MPER), 195–229 (DIVS…GFKP), 230–264 (DRFS…RIET), 266–296 (DVMV…MIQR), 297–332 (NIVA…GLQP), 333–363 (DVIT…GFLP), 364–394 (HMVL…MAEK), 395–429 (NVIS…SLVP), 430–464 (DSTT…RYWS), 465–495 (NTII…ILLK), 496–530 (DVVS…RVNP), 531–561 (NKST…MKRE), and 567–597 (GIEH…MPFV). The interval 602-677 (IWGSLLNASR…TSSRSTVEAK (76 aa)) is type E motif. Residues 678–708 (GKSHVFTNGDRSHVATNKIYEVLDVVSRMVG) form a type E(+) motif region. A type DYW motif region spans residues 710–804 (EDIYVHCVSR…NGRCSCGNYW (95 aa)).

The protein belongs to the PPR family. PCMP-H subfamily.

Its subcellular location is the plastid. It localises to the chloroplast. The protein is Pentatricopeptide repeat-containing protein At4g35130, chloroplastic (PCMP-H27) of Arabidopsis thaliana (Mouse-ear cress).